The primary structure comprises 256 residues: Probable ATP-dependent transporter slr0075 (256 aa).

The 245-residue stretch at 6–250 folds into the ABC transporter domain; the sequence is LSIKNLTASV…EEKGYDFLDE (245 aa). 38–45 is a binding site for ATP; sequence GRNGSGKS.

It belongs to the ABC transporter superfamily. Ycf16 family.

This is Probable ATP-dependent transporter slr0075 from Synechocystis sp. (strain ATCC 27184 / PCC 6803 / Kazusa).